We begin with the raw amino-acid sequence, 64 residues long: MLVLTRDIGETFSIGDDITVQILGVNGNQVRLGISAPKDIKVHRAEVYKRIANKLSQQAAQTQP.

This sequence belongs to the CsrA/RsmA family. In terms of assembly, homodimer; the beta-strands of each monomer intercalate to form a hydrophobic core, while the alpha-helices form wings that extend away from the core.

It localises to the cytoplasm. Its function is as follows. A key translational regulator that binds mRNA to regulate translation initiation and/or mRNA stability. Mediates global changes in gene expression, shifting from rapid growth to stress survival by linking envelope stress, the stringent response and the catabolite repression systems. Usually binds in the 5'-UTR; binding at or near the Shine-Dalgarno sequence prevents ribosome-binding, repressing translation, binding elsewhere in the 5'-UTR can activate translation and/or stabilize the mRNA. Its function is antagonized by small RNA(s). The sequence is that of Translational regulator CsrA 1 from Pseudomonas syringae pv. tomato (strain ATCC BAA-871 / DC3000).